Here is a 171-residue protein sequence, read N- to C-terminus: 3-hydroxydecanoyl-[acyl-carrier-protein] dehydratase (171 aa).

Histidine 70 is an active-site residue.

It belongs to the thioester dehydratase family. FabA subfamily. In terms of assembly, homodimer.

The protein localises to the cytoplasm. The catalysed reaction is a (3R)-hydroxyacyl-[ACP] = a (2E)-enoyl-[ACP] + H2O. It carries out the reaction (3R)-hydroxydecanoyl-[ACP] = (2E)-decenoyl-[ACP] + H2O. It catalyses the reaction (2E)-decenoyl-[ACP] = (3Z)-decenoyl-[ACP]. Its pathway is lipid metabolism; fatty acid biosynthesis. Its function is as follows. Necessary for the introduction of cis unsaturation into fatty acids. Catalyzes the dehydration of (3R)-3-hydroxydecanoyl-ACP to E-(2)-decenoyl-ACP and then its isomerization to Z-(3)-decenoyl-ACP. Can catalyze the dehydratase reaction for beta-hydroxyacyl-ACPs with saturated chain lengths up to 16:0, being most active on intermediate chain length. The protein is 3-hydroxydecanoyl-[acyl-carrier-protein] dehydratase of Nitrosococcus oceani (strain ATCC 19707 / BCRC 17464 / JCM 30415 / NCIMB 11848 / C-107).